A 453-amino-acid polypeptide reads, in one-letter code: Bifunctional protein GlmU (453 aa).

A pyrophosphorylase region spans residues 1–225 (MNIVILAAGT…DWETLGVNSK (225 aa)). UDP-N-acetyl-alpha-D-glucosamine contacts are provided by residues 6–9 (LAAG), Lys20, Gln71, 76–77 (GT), 98–100 (YGD), Gly135, Glu150, Asn165, and Asn223. A Mg(2+)-binding site is contributed by Asp100. Mg(2+) is bound at residue Asn223. Positions 226 to 246 (AQLAELERIHQRNVADALLVE) are linker. Positions 247–453 (GVTLADPARV…GYVRPVKKKS (207 aa)) are N-acetyltransferase. Residues Arg329 and Lys347 each coordinate UDP-N-acetyl-alpha-D-glucosamine. His359 (proton acceptor) is an active-site residue. UDP-N-acetyl-alpha-D-glucosamine is bound by residues Tyr362 and Asn373. Residues Ala376, 382–383 (NY), Ser401, and Ala419 contribute to the acetyl-CoA site.

It in the N-terminal section; belongs to the N-acetylglucosamine-1-phosphate uridyltransferase family. This sequence in the C-terminal section; belongs to the transferase hexapeptide repeat family. In terms of assembly, homotrimer. It depends on Mg(2+) as a cofactor.

Its subcellular location is the cytoplasm. The catalysed reaction is alpha-D-glucosamine 1-phosphate + acetyl-CoA = N-acetyl-alpha-D-glucosamine 1-phosphate + CoA + H(+). It carries out the reaction N-acetyl-alpha-D-glucosamine 1-phosphate + UTP + H(+) = UDP-N-acetyl-alpha-D-glucosamine + diphosphate. It participates in nucleotide-sugar biosynthesis; UDP-N-acetyl-alpha-D-glucosamine biosynthesis; N-acetyl-alpha-D-glucosamine 1-phosphate from alpha-D-glucosamine 6-phosphate (route II): step 2/2. Its pathway is nucleotide-sugar biosynthesis; UDP-N-acetyl-alpha-D-glucosamine biosynthesis; UDP-N-acetyl-alpha-D-glucosamine from N-acetyl-alpha-D-glucosamine 1-phosphate: step 1/1. It functions in the pathway bacterial outer membrane biogenesis; LPS lipid A biosynthesis. In terms of biological role, catalyzes the last two sequential reactions in the de novo biosynthetic pathway for UDP-N-acetylglucosamine (UDP-GlcNAc). The C-terminal domain catalyzes the transfer of acetyl group from acetyl coenzyme A to glucosamine-1-phosphate (GlcN-1-P) to produce N-acetylglucosamine-1-phosphate (GlcNAc-1-P), which is converted into UDP-GlcNAc by the transfer of uridine 5-monophosphate (from uridine 5-triphosphate), a reaction catalyzed by the N-terminal domain. This chain is Bifunctional protein GlmU, found in Burkholderia vietnamiensis (strain G4 / LMG 22486) (Burkholderia cepacia (strain R1808)).